The chain runs to 777 residues: Rho-GTPase-activating protein 8 (777 aa).

In terms of domain architecture, F-BAR spans 3–420 (SSFSNGFWSK…YQEIIQPESD (418 aa)). Positions 117–172 (QKLQTSQQVLTNQIKSYEKKYYTLKKTKSAYYNKCRNLEDYEEESKESNETTSEAI) form a coiled coil. A DEP domain is found at 213–296 (VLQEIPLQDY…WKDKAFQFAG (84 aa)). The 197-residue stretch at 454-650 (VDVEFLSHRD…DLLTYGPSIF (197 aa)) folds into the Rho-GAP domain. A disordered region spans residues 667–709 (LYQSSATPRSTDVSPTRPDSISSVRSHTAVESPRSSFEELQPS). Residues 668-692 (YQSSATPRSTDVSPTRPDSISSVRS) show a composition bias toward polar residues. Phosphoserine occurs at positions 676 and 680. Phosphothreonine is present on threonine 682. Position 686 is a phosphoserine (serine 686). Phosphothreonine is present on threonine 694. Residue serine 698 is modified to Phosphoserine.

In terms of assembly, interacts with pak1/shk1. In terms of processing, phosphorylated by pak1/shk1.

The protein resides in the cytoplasm. Functionally, acts in signal transduction. Negatively regulates the pak1/shk1 control pathway. The polypeptide is Rho-GTPase-activating protein 8 (rga8) (Schizosaccharomyces pombe (strain 972 / ATCC 24843) (Fission yeast)).